The primary structure comprises 372 residues: uncharacterized protein (372 aa).

Residue 4-18 (YIIVGAGILGASTAY) participates in FAD binding.

This sequence belongs to the DadA oxidoreductase family. The cofactor is FAD.

This is an uncharacterized protein from Bacillus subtilis (strain 168).